We begin with the raw amino-acid sequence, 236 residues long: Cutinase (236 aa).

A signal peptide spans 1-20; sequence MSLTLFSFLSLVSILCIVTA. A disulfide bond links cysteine 66 and cysteine 143. Serine 154 acts as the Nucleophile in catalysis. A disulfide bond links cysteine 202 and cysteine 209. Aspartate 206 is a catalytic residue. The active-site Proton donor/acceptor is histidine 218.

Belongs to the cutinase family. In terms of processing, the 2 disulfide bonds play a critical role in holding the catalytic residues in juxta-position; reduction of the disulfide bridges results in the complete inactivation of the enzyme.

It localises to the secreted. It carries out the reaction cutin + H2O = cutin monomers.. Functionally, catalyzes the hydrolysis of complex carboxylic polyesters found in the cell wall of plants. Degrades cutin, a macromolecule that forms the structure of the plant cuticle. Allows pathogenic fungi to penetrate through the cuticular barrier into the host plant during the initial stage of fungal infection. The polypeptide is Cutinase (CUT1) (Blumeria hordei (Barley powdery mildew)).